Here is a 122-residue protein sequence, read N- to C-terminus: Small ribosomal subunit protein uS13 (122 aa).

A disordered region spans residues 97-122 (PCRGQRTKTNARTRKGPARTVAGKKK).

The protein belongs to the universal ribosomal protein uS13 family. Part of the 30S ribosomal subunit. Forms a loose heterodimer with protein S19. Forms two bridges to the 50S subunit in the 70S ribosome.

Its function is as follows. Located at the top of the head of the 30S subunit, it contacts several helices of the 16S rRNA. In the 70S ribosome it contacts the 23S rRNA (bridge B1a) and protein L5 of the 50S subunit (bridge B1b), connecting the 2 subunits; these bridges are implicated in subunit movement. Contacts the tRNAs in the A and P-sites. This Geobacter sp. (strain M21) protein is Small ribosomal subunit protein uS13.